A 213-amino-acid chain; its full sequence is Probable nicotinate-nucleotide adenylyltransferase (213 aa).

It belongs to the NadD family.

The catalysed reaction is nicotinate beta-D-ribonucleotide + ATP + H(+) = deamido-NAD(+) + diphosphate. Its pathway is cofactor biosynthesis; NAD(+) biosynthesis; deamido-NAD(+) from nicotinate D-ribonucleotide: step 1/1. Catalyzes the reversible adenylation of nicotinate mononucleotide (NaMN) to nicotinic acid adenine dinucleotide (NaAD). The chain is Probable nicotinate-nucleotide adenylyltransferase from Citrobacter koseri (strain ATCC BAA-895 / CDC 4225-83 / SGSC4696).